Here is a 298-residue protein sequence, read N- to C-terminus: Craniofacial development protein 1 (298 aa).

Acidic residues-rich tracts occupy residues 1 to 18 (MEEFDSEDFSTSEEDEDY) and 25 to 43 (YSEDDINELVKEDEVDVEE). 2 disordered regions span residues 1-159 (MEEF…PKET) and 179-223 (KEVD…SSGM). The span at 49-65 (KGTKRKAERFMPRKRKQ) shows a compositional bias: basic residues. Residues serine 82 and serine 85 each carry the phosphoserine modification. Residues 87–102 (SEEEDTATEQEEGTES) are compositionally biased toward acidic residues. The span at 103 to 112 (EDARKKKEDE) shows a compositional bias: basic and acidic residues. Serine 116 is modified (phosphoserine). The segment covering 124 to 134 (KSKVPPSTPVK) has biased composition (low complexity). Lysine 149 is covalently cross-linked (Glycyl lysine isopeptide (Lys-Gly) (interchain with G-Cter in SUMO2)). Composition is skewed to basic and acidic residues over residues 149-159 (KAEEQEKPKET) and 179-200 (KEVDPTSKEAKSFFKQSEKEKP). The segment at 177 to 216 (VTKEVDPTSKEAKSFFKQSEKEKPQPNVPSAVSSLPAGSG) is hydrophilic. A Phosphoserine modification is found at serine 215. Positions 217-298 (LKRSSGMSSL…RDLRLSKMKP (82 aa)) constitute a BCNT-C domain. Lysine 218 carries the post-translational modification N6-methyllysine.

The protein localises to the chromosome. It localises to the centromere. Its subcellular location is the kinetochore. May play a role during embryogenesis. The polypeptide is Craniofacial development protein 1 (CFDP1) (Tragulus javanicus (Lesser Malay chevrotain)).